The sequence spans 224 residues: Type II restriction enzyme BstVI (224 aa).

This sequence belongs to the XhoI type II restriction endonuclease family.

It carries out the reaction Endonucleolytic cleavage of DNA to give specific double-stranded fragments with terminal 5'-phosphates.. In terms of biological role, a P subtype restriction enzyme that recognizes the double-stranded sequence 5'-CTCGAG-3' and cleaves after C-1. This chain is Type II restriction enzyme BstVI, found in Geobacillus stearothermophilus (Bacillus stearothermophilus).